A 672-amino-acid chain; its full sequence is Segment polarity protein dishevelled homolog mig-5 (672 aa).

The region spanning 9–91 (CSQIKVFYYL…GFYEIFLVST (83 aa)) is the DIX domain. Disordered stretches follow at residues 97–127 (LPRN…ATPY), 150–174 (YTSN…SSLY), and 187–215 (DDDR…ATES). A compositionally biased stretch (polar residues) spans 98-108 (PRNSGTMTRPQ). Residues 160–169 (YDEHTRRTGD) show a composition bias toward basic and acidic residues. The span at 191–202 (RRKKQKKERFRR) shows a compositional bias: basic residues. Positions 226-294 (EIYLPMKNVP…PQAVRSLREA (69 aa)) constitute a PDZ domain. The DEP domain maps to 427-501 (PDSGLAVKNR…TEKCYYVFGD (75 aa)). The disordered stretch occupies residues 604–672 (KNNHRQVPAP…SNSRTRILRT (69 aa)). Residues 660–672 (ENSSNSRTRILRT) show a composition bias toward polar residues.

It belongs to the DSH family.

Its subcellular location is the cytoplasm. The protein resides in the cell cortex. It is found in the cell membrane. The protein localises to the cell junction. Functionally, plays a role in the signal transduction pathways mediated by multiple Wnt genes. Functions redundantly with other dishevelled family members throughout development. During embryonic and larval development, controls cell migration and/or cell fate specification of hypodermal cells, hypodermal seam cells, vulval precursor cells and, through distal tip cell migration, somatic gonad precursor cells. In early embryos, regulates the orientation of the mitotic spindle of blastomeres and specifically, along with dsh-2, is required for the correct mitotic spindle orientation of the ABar blastomere division plane. Controls the polarity and the asymmetric localization of downstream components of the wnt/beta-catenin asymmetry pathway, and in particular, controls the asymmetric localization of the wnt receptor lin-17/Frizzled in ectodermal blast B cells. May act redundantly with dsh-2 to regulate the expression and nuclear localization of the beta-catenin homolog wrm-2, but alone seems to be required for the polarity of wrm-2 during the asymmetric cell division of hypodermal seam cells. Also, maintains the polarity and migration of QL neuroblasts in larvae. During the embryonic development of touch receptor neurons, may act redundantly with dsh-1, downstream of wnt signaling ligands and the wnt receptor lin-17/Frizzled, to direct the growth of neurites of touch receptor neurons towards the anterior of the body of the worm and towards the PLM touch receptor neuron and other tail neurons. May play a role in the guidance of posterior D-type motor neuron axons along the anteroposterior axis. This chain is Segment polarity protein dishevelled homolog mig-5, found in Caenorhabditis elegans.